The chain runs to 718 residues: Cyclomaltodextrin glucanotransferase (718 aa).

A signal peptide spans 1–34; it reads MFQMAKRAFLSTTLTLGLLAGSALPFLPASAAYA. The tract at residues 35–172 is A1; it reads DPDIAVTNKQ…GIKIIIDFAP (138 aa). Residues aspartate 61, asparagine 63, asparagine 66, and asparagine 67 each contribute to the Ca(2+) site. Residues cysteine 77 and cysteine 84 are joined by a disulfide bond. Ca(2+) is bound by residues glycine 85 and aspartate 87. Residue 134–135 participates in substrate binding; the sequence is YW. Asparagine 173 serves as a coordination point for Ca(2+). Residues 173–236 form a b region; that stretch reads NHTSPAMETD…NLYDLADFNH (64 aa). Histidine 174 serves as a coordination point for substrate. Ca(2+) is bound at residue isoleucine 224. 227-230 serves as a coordination point for substrate; it reads NLYD. Residue aspartate 233 coordinates Ca(2+). The A2 stretch occupies residues 237–440; that stretch reads NNATIDKYFK…LRKSNPAIAY (204 aa). Residue arginine 261 coordinates substrate. Aspartate 263 functions as the Nucleophile in the catalytic mechanism. 266 to 267 contacts substrate; it reads KH. A Ca(2+)-binding site is contributed by histidine 267. The active-site Proton donor is glutamate 291. Substrate contacts are provided by histidine 361, aspartate 405, and arginine 409. The interval 441–528 is c; it reads GSTQQRWINN…ATAVWQYTAA (88 aa). The d stretch occupies residues 529-614; the sequence is ETTPTIGHVG…SNAYNHFTIL (86 aa). The 81-residue stretch at 532–612 folds into the IPT/TIG domain; sequence PTIGHVGPVM…VNSNAYNHFT (81 aa). One can recognise a CBM20 domain in the interval 613 to 718; the sequence is ILTGDQVTVR…GTATVTVNWQ (106 aa). The e stretch occupies residues 615–718; that stretch reads TGDQVTVRFV…GTATVTVNWQ (104 aa).

The protein belongs to the glycosyl hydrolase 13 family. As to quaternary structure, monomer. The cofactor is Ca(2+).

Its subcellular location is the secreted. It catalyses the reaction Cyclizes part of a (1-&gt;4)-alpha-D-glucan chain by formation of a (1-&gt;4)-alpha-D-glucosidic bond.. In Bacillus sp. (strain 6.6.3), this protein is Cyclomaltodextrin glucanotransferase (cgt).